Here is a 338-residue protein sequence, read N- to C-terminus: Nicotinate-nucleotide--dimethylbenzimidazole phosphoribosyltransferase (338 aa).

Glu305 acts as the Proton acceptor in catalysis.

The protein belongs to the CobT family.

The enzyme catalyses 5,6-dimethylbenzimidazole + nicotinate beta-D-ribonucleotide = alpha-ribazole 5'-phosphate + nicotinate + H(+). The protein operates within nucleoside biosynthesis; alpha-ribazole biosynthesis; alpha-ribazole from 5,6-dimethylbenzimidazole: step 1/2. Functionally, catalyzes the synthesis of alpha-ribazole-5'-phosphate from nicotinate mononucleotide (NAMN) and 5,6-dimethylbenzimidazole (DMB). In Rhizobium meliloti (strain 1021) (Ensifer meliloti), this protein is Nicotinate-nucleotide--dimethylbenzimidazole phosphoribosyltransferase.